The sequence spans 55 residues: Large ribosomal subunit protein bL33 (55 aa).

This sequence belongs to the bacterial ribosomal protein bL33 family.

The chain is Large ribosomal subunit protein bL33 from Caulobacter vibrioides (strain ATCC 19089 / CIP 103742 / CB 15) (Caulobacter crescentus).